The primary structure comprises 194 residues: MEAWYMDDSADDQRKPHHRSPPEYVSLEKLAELGVLHWVLDADSFETDPELQRIRKERGYNYEDFIEVSPERLANYETKIKNFYEEHMHTDEEIRYCLDGSGYFDIRDPEDRWIRIWVKKGDMIVLPAGSYHRFTLDENNYLKAMRLFVGEPVWTPYNRPQDEHPVRKDYINNFLKTHLDKIDVSLSTQHAATA.

The interval methionine 1 to proline 21 is disordered. Fe(2+) contacts are provided by histidine 87, histidine 89, glutamate 93, and histidine 132. Ni(2+)-binding residues include histidine 87, histidine 89, glutamate 93, and histidine 132.

It belongs to the acireductone dioxygenase (ARD) family. The cofactor is Fe(2+). Requires Ni(2+) as cofactor.

The protein resides in the cytoplasm. Its subcellular location is the nucleus. The enzyme catalyses 1,2-dihydroxy-5-(methylsulfanyl)pent-1-en-3-one + O2 = 4-methylsulfanyl-2-oxobutanoate + formate + 2 H(+). It catalyses the reaction 1,2-dihydroxy-5-(methylsulfanyl)pent-1-en-3-one + O2 = 3-(methylsulfanyl)propanoate + CO + formate + 2 H(+). It functions in the pathway amino-acid biosynthesis; L-methionine biosynthesis via salvage pathway; L-methionine from S-methyl-5-thio-alpha-D-ribose 1-phosphate: step 5/6. In terms of biological role, catalyzes 2 different reactions between oxygen and the acireductone 1,2-dihydroxy-3-keto-5-methylthiopentene (DHK-MTPene) depending upon the metal bound in the active site. Fe-containing acireductone dioxygenase (Fe-ARD) produces formate and 2-keto-4-methylthiobutyrate (KMTB), the alpha-ketoacid precursor of methionine in the methionine recycle pathway. Ni-containing acireductone dioxygenase (Ni-ARD) produces methylthiopropionate, carbon monoxide and formate, and does not lie on the methionine recycle pathway. The chain is Acireductone dioxygenase 1 from Physcomitrium patens (Spreading-leaved earth moss).